The sequence spans 261 residues: Small ribosomal subunit protein uS3 (261 aa).

A KH type-2 domain is found at 39–107 (VREYLKRKLA…PVHVSIEEIR (69 aa)). The disordered stretch occupies residues 213-261 (QPVAEEPAADDRRPRRTPGRPDGDKPRTRTVKKVDGAADPAKRVRKAGA). The segment covering 221–254 (ADDRRPRRTPGRPDGDKPRTRTVKKVDGAADPAK) has biased composition (basic and acidic residues).

This sequence belongs to the universal ribosomal protein uS3 family. Part of the 30S ribosomal subunit. Forms a tight complex with proteins S10 and S14.

In terms of biological role, binds the lower part of the 30S subunit head. Binds mRNA in the 70S ribosome, positioning it for translation. This Dechloromonas aromatica (strain RCB) protein is Small ribosomal subunit protein uS3.